The sequence spans 209 residues: Large ribosomal subunit protein uL3 (209 aa).

The segment at T133–P152 is disordered. Position 150 is an N5-methylglutamine (Q150).

The protein belongs to the universal ribosomal protein uL3 family. As to quaternary structure, part of the 50S ribosomal subunit. Forms a cluster with proteins L14 and L19. Methylated by PrmB.

Functionally, one of the primary rRNA binding proteins, it binds directly near the 3'-end of the 23S rRNA, where it nucleates assembly of the 50S subunit. In Yersinia enterocolitica serotype O:8 / biotype 1B (strain NCTC 13174 / 8081), this protein is Large ribosomal subunit protein uL3.